The following is a 357-amino-acid chain: Phospho-N-acetylmuramoyl-pentapeptide-transferase (357 aa).

The next 10 membrane-spanning stretches (helical) occupy residues 4–24 (QILF…PLLI), 52–72 (TMGG…SKVI), 77–97 (PTFS…VGFL), 115–135 (AKMA…LQFA), 153–173 (FGWT…ILAM), 186–206 (LATG…VWQF), 228–248 (PLDL…FLWW), 255–275 (IFMG…LAIC), 280–300 (LLVA…VIQV), and 334–354 (FWII…AGWA).

Belongs to the glycosyltransferase 4 family. MraY subfamily. The cofactor is Mg(2+).

It is found in the cell membrane. The enzyme catalyses UDP-N-acetyl-alpha-D-muramoyl-L-alanyl-gamma-D-glutamyl-meso-2,6-diaminopimeloyl-D-alanyl-D-alanine + di-trans,octa-cis-undecaprenyl phosphate = di-trans,octa-cis-undecaprenyl diphospho-N-acetyl-alpha-D-muramoyl-L-alanyl-D-glutamyl-meso-2,6-diaminopimeloyl-D-alanyl-D-alanine + UMP. Its pathway is cell wall biogenesis; peptidoglycan biosynthesis. Functionally, catalyzes the initial step of the lipid cycle reactions in the biosynthesis of the cell wall peptidoglycan: transfers peptidoglycan precursor phospho-MurNAc-pentapeptide from UDP-MurNAc-pentapeptide onto the lipid carrier undecaprenyl phosphate, yielding undecaprenyl-pyrophosphoryl-MurNAc-pentapeptide, known as lipid I. The protein is Phospho-N-acetylmuramoyl-pentapeptide-transferase of Streptomyces avermitilis (strain ATCC 31267 / DSM 46492 / JCM 5070 / NBRC 14893 / NCIMB 12804 / NRRL 8165 / MA-4680).